The primary structure comprises 230 residues: Small ribosomal subunit protein uS3c (230 aa).

Residues 39–109 (IRSFIHSKLS…QLRVNVVEIA (71 aa)) enclose the KH type-2 domain.

This sequence belongs to the universal ribosomal protein uS3 family. In terms of assembly, part of the 30S ribosomal subunit.

It is found in the plastid. It localises to the chloroplast. This chain is Small ribosomal subunit protein uS3c (rps3), found in Pyropia yezoensis (Susabi-nori).